Consider the following 213-residue polypeptide: NADH dehydrogenase [ubiquinone] iron-sulfur protein 7, mitochondrial (213 aa).

A mitochondrion-targeting transit peptide spans 1–38; it reads MAVLSAPGLRGFRILGLRSSVGPAVQARGVHQSVATDG. The interval 31 to 53 is disordered; it reads HQSVATDGPSSTQPALPKARAVA. The segment covering 33 to 44 has biased composition (polar residues); the sequence is SVATDGPSSTQP. [4Fe-4S] cluster-binding residues include cysteine 88 and cysteine 89. Position 111 is a hydroxyarginine (arginine 111). 2 residues coordinate [4Fe-4S] cluster: cysteine 153 and cysteine 183.

Belongs to the complex I 20 kDa subunit family. As to quaternary structure, core subunit of respiratory chain NADH dehydrogenase (Complex I) which is composed of 45 different subunits. This is a component of the iron-sulfur (IP) fragment of the enzyme. It depends on [4Fe-4S] cluster as a cofactor. Hydroxylated at Arg-111 by NDUFAF5 early in the pathway of assembly of complex I, before the formation of the juncture between peripheral and membrane arms.

It localises to the mitochondrion inner membrane. It carries out the reaction a ubiquinone + NADH + 5 H(+)(in) = a ubiquinol + NAD(+) + 4 H(+)(out). Core subunit of the mitochondrial membrane respiratory chain NADH dehydrogenase (Complex I) which catalyzes electron transfer from NADH through the respiratory chain, using ubiquinone as an electron acceptor. Essential for the catalytic activity of complex I. The chain is NADH dehydrogenase [ubiquinone] iron-sulfur protein 7, mitochondrial (NDUFS7) from Homo sapiens (Human).